A 512-amino-acid polypeptide reads, in one-letter code: Serine--tRNA ligase, cytoplasmic (512 aa).

Position 1 is an N-acetylmethionine (methionine 1). The interval 9-61 is interaction with tRNA; that stretch reads RVDKGGDPALIRETQEKRFKDPGLVDQLVKADSEWRRCRFRADNLNKLKNLCS. At serine 241 the chain carries Phosphoserine. The L-serine site is built by threonine 271 and arginine 302. Residues 302–304 and 318–321 contribute to the ATP site; these read RQE and VHQF. An N6-acetyllysine modification is found at lysine 323. Glutamate 325 provides a ligand contact to L-serine. 391-394 is an ATP binding site; the sequence is ELVS. Residue asparagine 427 participates in L-serine binding. The segment at 470-512 is disordered; the sequence is FVKPAPIDQEPSKKQKKQHEGSKKKAKEVPLENQLQSMEVTEA. Over residues 479-499 the composition is skewed to basic and acidic residues; the sequence is EPSKKQKKQHEGSKKKAKEVP. The Nuclear localization signal signature appears at 482-494; it reads KKQKKQHEGSKKK. Residues 502–512 are compositionally biased toward polar residues; the sequence is NQLQSMEVTEA. A Phosphoserine modification is found at serine 506.

The protein belongs to the class-II aminoacyl-tRNA synthetase family. Type-1 seryl-tRNA synthetase subfamily. In terms of assembly, homodimer. The tRNA molecule may bind across the dimer. Interacts with SIRT2. Interacts with METTL6; interaction is required for the tRNA N(3)-methylcytidine methyltransferase activity of METTL6.

The protein localises to the cytoplasm. It is found in the nucleus. The catalysed reaction is tRNA(Ser) + L-serine + ATP = L-seryl-tRNA(Ser) + AMP + diphosphate + H(+). It carries out the reaction tRNA(Sec) + L-serine + ATP = L-seryl-tRNA(Sec) + AMP + diphosphate + H(+). The protein operates within aminoacyl-tRNA biosynthesis; selenocysteinyl-tRNA(Sec) biosynthesis; L-seryl-tRNA(Sec) from L-serine and tRNA(Sec): step 1/1. Its function is as follows. Catalyzes the attachment of serine to tRNA(Ser) in a two-step reaction: serine is first activated by ATP to form Ser-AMP and then transferred to the acceptor end of tRNA(Ser). Is probably also able to aminoacylate tRNA(Sec) with serine, to form the misacylated tRNA L-seryl-tRNA(Sec), which will be further converted into selenocysteinyl-tRNA(Sec). In the nucleus, binds to the VEGFA core promoter and prevents MYC binding and transcriptional activation by MYC. Recruits SIRT2 to the VEGFA promoter, promoting deacetylation of histone H4 at 'Lys-16' (H4K16). Thereby, inhibits the production of VEGFA and sprouting angiogenesis mediated by VEGFA. This Mus musculus (Mouse) protein is Serine--tRNA ligase, cytoplasmic (Sars1).